We begin with the raw amino-acid sequence, 335 residues long: F420-dependent glucose-6-phosphate dehydrogenase (335 aa).

Aspartate 40 lines the coenzyme F420-(gamma-Glu)n pocket. The active-site Proton donor is the histidine 41. Coenzyme F420-(gamma-Glu)n-binding positions include threonine 77 and 108-109; that span reads TG. The Proton acceptor role is filled by glutamate 110. Coenzyme F420-(gamma-Glu)n-binding positions include asparagine 113, 177-178, and 180-181; these read GG and VV. Threonine 195, lysine 198, lysine 259, and arginine 283 together coordinate substrate.

Belongs to the F420-dependent glucose-6-phosphate dehydrogenase family. In terms of assembly, homodimer.

It catalyses the reaction oxidized coenzyme F420-(gamma-L-Glu)(n) + D-glucose 6-phosphate + H(+) = 6-phospho-D-glucono-1,5-lactone + reduced coenzyme F420-(gamma-L-Glu)(n). Catalyzes the coenzyme F420-dependent oxidation of glucose 6-phosphate (G6P) to 6-phosphogluconolactone. The polypeptide is F420-dependent glucose-6-phosphate dehydrogenase (Segniliparus rotundus (strain ATCC BAA-972 / CDC 1076 / CIP 108378 / DSM 44985 / JCM 13578)).